We begin with the raw amino-acid sequence, 59 residues long: Small ribosomal subunit protein eS17 (59 aa).

This sequence belongs to the eukaryotic ribosomal protein eS17 family.

In Halobacterium salinarum (strain ATCC 29341 / DSM 671 / R1), this protein is Small ribosomal subunit protein eS17.